The following is a 683-amino-acid chain: MPDRSTKTTMGTEDMHERKVSVEPQDSHQDAQPRGMFHNIKFFVLCHSLLQLTQLMISGYLKSSISTVEKRFGLSSQISGLLAAFNEVGNVSLILFVSYFGSRVHRPRMIGYGALLVATAGLLMALPHFISEPYRYDHSSSDNRSLDFEASLCLPTTMAPASALSNGSCSSHTETKHLTMVGIMFAAQTLLGIGGVPIQPFGISYIDDFAHHSNSPLYIGILFGITTMGPGLAYGLGSLMLRLYVDIDRMPEGGINLTPKDPRWVGAWWLGFLISSGLVVLASSPYFFFPREMPKEKHEFHFRRKVLASAASTASKGEDLSSQHEPLKKQAGLAQIAPDLTLVQFVKVFPRVLLRNLRHPIFLLVVLSQVCTSSMVAGMATFLPKFLERQFSITASFANMLLGCLTIPLVIVGIMMGGVLVKRLHLSPVQCSALCLLGSLLCLLFSVPLFFIGCSTHQIAGITQDLGAQPGPSLFPGCSEPCSCQSDDFNPVCDTSAYVEYTTPCHAGCTGRVVQEALGKSQVFYTNCSCVAGNGTVPAGSCESACSRLVLPFIVLFSLGAGLASITHTPSFMLILRGVKKEDKTLAVGMQFMLLRVLAWMPSPVIHGSAIDTTCVHWALTCGRRAVCRYYDHDLLRNRFIGLQFFFKSGSLVCFTLVLAILRQQSREASTRTTVKSSELQQL.

A disordered region spans residues 1-30; it reads MPDRSTKTTMGTEDMHERKVSVEPQDSHQD. Residues 1 to 41 lie on the Cytoplasmic side of the membrane; sequence MPDRSTKTTMGTEDMHERKVSVEPQDSHQDAQPRGMFHNIK. The segment covering 13 to 30 has biased composition (basic and acidic residues); that stretch reads EDMHERKVSVEPQDSHQD. Position 21 is a phosphoserine (Ser21). A helical membrane pass occupies residues 42–61; the sequence is FFVLCHSLLQLTQLMISGYL. Topologically, residues 62 to 80 are extracellular; it reads KSSISTVEKRFGLSSQISG. The helical transmembrane segment at 81–101 threads the bilayer; that stretch reads LLAAFNEVGNVSLILFVSYFG. Residues 102 to 107 lie on the Cytoplasmic side of the membrane; that stretch reads SRVHRP. The chain crosses the membrane as a helical span at residues 108-132; that stretch reads RMIGYGALLVATAGLLMALPHFISE. The Extracellular portion of the chain corresponds to 133–177; sequence PYRYDHSSSDNRSLDFEASLCLPTTMAPASALSNGSCSSHTETKH. Asn143 and Asn166 each carry an N-linked (GlcNAc...) asparagine glycan. A helical transmembrane segment spans residues 178–207; sequence LTMVGIMFAAQTLLGIGGVPIQPFGISYID. Topologically, residues 208 to 226 are cytoplasmic; it reads DFAHHSNSPLYIGILFGIT. Residues 227–247 traverse the membrane as a helical segment; it reads TMGPGLAYGLGSLMLRLYVDI. The Extracellular segment spans residues 248 to 265; sequence DRMPEGGINLTPKDPRWV. The helical transmembrane segment at 266–290 threads the bilayer; sequence GAWWLGFLISSGLVVLASSPYFFFP. Topologically, residues 291-355 are cytoplasmic; sequence REMPKEKHEF…VKVFPRVLLR (65 aa). Phosphoserine occurs at positions 312 and 315. The chain crosses the membrane as a helical span at residues 356-377; that stretch reads NLRHPIFLLVVLSQVCTSSMVA. The Extracellular segment spans residues 378-397; it reads GMATFLPKFLERQFSITASF. A helical membrane pass occupies residues 398-421; sequence ANMLLGCLTIPLVIVGIMMGGVLV. Residues 422–425 are Cytoplasmic-facing; it reads KRLH. The helical transmembrane segment at 426–449 threads the bilayer; it reads LSPVQCSALCLLGSLLCLLFSVPL. The Extracellular portion of the chain corresponds to 450 to 553; sequence FFIGCSTHQI…SACSRLVLPF (104 aa). The 61-residue stretch at 472-532 folds into the Kazal-like domain; the sequence is PSLFPGCSEP…VFYTNCSCVA (61 aa). 3 disulfides stabilise this stretch: Cys478–Cys509, Cys484–Cys505, and Cys493–Cys530. Asn527 and Asn534 each carry an N-linked (GlcNAc...) asparagine glycan. The helical transmembrane segment at 554-576 threads the bilayer; the sequence is IVLFSLGAGLASITHTPSFMLIL. Topologically, residues 577–585 are cytoplasmic; sequence RGVKKEDKT. A helical transmembrane segment spans residues 586 to 611; that stretch reads LAVGMQFMLLRVLAWMPSPVIHGSAI. The Extracellular segment spans residues 612–644; the sequence is DTTCVHWALTCGRRAVCRYYDHDLLRNRFIGLQ. A helical membrane pass occupies residues 645 to 662; it reads FFFKSGSLVCFTLVLAIL. Residues 663–683 lie on the Cytoplasmic side of the membrane; sequence RQQSREASTRTTVKSSELQQL.

It belongs to the organo anion transporter (TC 2.A.60) family. As to expression, expressed in liver, kidney, small intestine mucosa, large intestine, brain, lung, spleen, stomach and heart.

It localises to the cell membrane. The protein localises to the basal cell membrane. The protein resides in the apical cell membrane. The catalysed reaction is dehydroepiandrosterone 3-sulfate(out) = dehydroepiandrosterone 3-sulfate(in). The enzyme catalyses estrone 3-sulfate(out) = estrone 3-sulfate(in). It carries out the reaction estrone 3-sulfate(out) + hydrogencarbonate(in) = estrone 3-sulfate(in) + hydrogencarbonate(out). It catalyses the reaction taurocholate(out) = taurocholate(in). The catalysed reaction is coproporphyrin III(out) = coproporphyrin III(in). The enzyme catalyses substance P(out) = substance P(in). It carries out the reaction pregnenolone sulfate(out) = pregnenolone sulfate(in). It catalyses the reaction prostaglandin E2(out) = prostaglandin E2(in). The catalysed reaction is prostaglandin D2(out) = prostaglandin D2(in). The enzyme catalyses L-thyroxine(out) = L-thyroxine(in). Mediates the Na(+)-independent transport of steroid sulfate conjugates such as estrone 3-sulfate (E1S), dehydroepiandrosterone sulfate (DHEA-S) and pregnenolone sulfate (PregS) and other specific organic anions. Responsible for the transport of E1S through the basal membrane of syncytiotrophoblast, highlighting a potential role in the placental absorption of fetal-derived sulfated steroids including DHEA-S. Also facilitates the uptake of sulfated steroids at the basal/sinusoidal membrane of hepatocytes, therefore accounting for the major part of organic anions clearance of liver. Mediates the intestinal uptake of sulfated steroids. Mediates the uptake of the neurosteroids DHEA-S and PregS into the endothelial cells of the blood-brain barrier as the first step to enter the brain. Also plays a role in the reuptake of neuropeptides such as substance P/TAC1 and vasoactive intestinal peptide/VIP released from retinal neurons. May act as a heme transporter that promotes cellular iron availability. Also transports heme by-product coproporphyrin III (CPIII), and may be involved in their hepatic disposition. Mediates the uptake of other substrates such as prostaglandins D2 (PGD2), E1 (PGE1) and E2 (PGE2), taurocholate, L-thyroxine, leukotriene C4 and thromboxane B2. May contribute to regulate the transport of organic compounds in testis across the blood-testis-barrier. Shows a pH-sensitive substrate specificity which may be ascribed to the protonation state of the binding site and leads to a stimulation of substrate transport in an acidic microenvironment. The exact transport mechanism has not been yet deciphered but most likely involves an anion exchange, coupling the cellular uptake of organic substrate with the efflux of an anionic compound. Hydrogencarbonate/HCO3(-) acts as a probable counteranion that exchanges for organic anions. Cytoplasmic glutamate may also act as counteranion in the placenta. An inwardly directed proton gradient has also been proposed as the driving force of E1S uptake with a (H(+):E1S) stoichiometry of (1:1). In Mus musculus (Mouse), this protein is Solute carrier organic anion transporter family member 2B1.